The following is a 513-amino-acid chain: GMP synthase [glutamine-hydrolyzing] (513 aa).

The Glutamine amidotransferase type-1 domain occupies 9-198; the sequence is LILVLDFGSQ…VRRVCDCKGQ (190 aa). Cys-86 functions as the Nucleophile in the catalytic mechanism. Active-site residues include His-172 and Glu-174. A GMPS ATP-PPase domain is found at 199 to 388; sequence WTMENFIEIE…LGIPEHLVWR (190 aa). 226–232 lines the ATP pocket; sequence SGGVDSS.

In terms of assembly, homodimer.

The catalysed reaction is XMP + L-glutamine + ATP + H2O = GMP + L-glutamate + AMP + diphosphate + 2 H(+). Its pathway is purine metabolism; GMP biosynthesis; GMP from XMP (L-Gln route): step 1/1. Catalyzes the synthesis of GMP from XMP. The chain is GMP synthase [glutamine-hydrolyzing] from Staphylococcus aureus (strain Mu3 / ATCC 700698).